We begin with the raw amino-acid sequence, 128 residues long: Secreted RxLR effector protein RXLR-C09 (128 aa).

Positions 1-22 are cleaved as a signal peptide; it reads MRFCLVFIRLAAFVILSGGATS. Positions 58–75 match the RxLR-dEER motif; the sequence is RLLRLNDQADISGHDEER.

It belongs to the RxLR effector family.

The protein resides in the secreted. It is found in the host cell membrane. The protein localises to the host nucleus. Its function is as follows. Secreted effector that suppresses pattern-triggered immunity (PTI) in plant host. The sequence is that of Secreted RxLR effector protein RXLR-C09 from Plasmopara halstedii (Downy mildew of sunflower).